Consider the following 259-residue polypeptide: UPF0246 protein PSPPH_1119 (259 aa).

This sequence belongs to the UPF0246 family.

The chain is UPF0246 protein PSPPH_1119 from Pseudomonas savastanoi pv. phaseolicola (strain 1448A / Race 6) (Pseudomonas syringae pv. phaseolicola (strain 1448A / Race 6)).